A 328-amino-acid polypeptide reads, in one-letter code: Carbonic anhydrase-related protein 11 (328 aa).

The N-terminal stretch at 1 to 23 (MGGAARLSAPQALVLWAALGAAA) is a signal peptide. One can recognise an Alpha-carbonic anhydrase domain in the interval 33-303 (DWWSYKENLQ…LAHRALRGNR (271 aa)). N-linked (GlcNAc...) asparagine glycosylation occurs at Asn-118. Residues 300–328 (RGNRDPRHPERRCRGPNYRLHVDGGPHGR) are disordered. Residues 319-328 (LHVDGGPHGR) are compositionally biased toward basic and acidic residues.

It belongs to the alpha-carbonic anhydrase family.

The protein localises to the secreted. Its function is as follows. Does not have a catalytic activity. This is Carbonic anhydrase-related protein 11 (Ca11) from Mus musculus (Mouse).